A 158-amino-acid polypeptide reads, in one-letter code: 6,7-dimethyl-8-ribityllumazine synthase (158 aa).

5-amino-6-(D-ribitylamino)uracil is bound by residues Phe22, 56 to 58 (ALE), and 80 to 82 (VVI). 85–86 (ET) contributes to the (2S)-2-hydroxy-3-oxobutyl phosphate binding site. His88 acts as the Proton donor in catalysis. Asn113 is a binding site for 5-amino-6-(D-ribitylamino)uracil. Arg127 serves as a coordination point for (2S)-2-hydroxy-3-oxobutyl phosphate.

This sequence belongs to the DMRL synthase family.

It catalyses the reaction (2S)-2-hydroxy-3-oxobutyl phosphate + 5-amino-6-(D-ribitylamino)uracil = 6,7-dimethyl-8-(1-D-ribityl)lumazine + phosphate + 2 H2O + H(+). Its pathway is cofactor biosynthesis; riboflavin biosynthesis; riboflavin from 2-hydroxy-3-oxobutyl phosphate and 5-amino-6-(D-ribitylamino)uracil: step 1/2. Functionally, catalyzes the formation of 6,7-dimethyl-8-ribityllumazine by condensation of 5-amino-6-(D-ribitylamino)uracil with 3,4-dihydroxy-2-butanone 4-phosphate. This is the penultimate step in the biosynthesis of riboflavin. This Neisseria meningitidis serogroup C (strain 053442) protein is 6,7-dimethyl-8-ribityllumazine synthase.